A 293-amino-acid chain; its full sequence is Movement protein BC1 (293 aa).

Belongs to the begomovirus movement protein BC1 family. In terms of assembly, binds to dimeric supercoiled plasmid DNA. In terms of processing, phosphorylated.

The protein resides in the host cell membrane. It is found in the host microsome membrane. Its subcellular location is the host endoplasmic reticulum membrane. Transports viral genome to neighboring plant cells directly through plasmosdesmata, without any budding. The movement protein allows efficient cell to cell propagation, by bypassing the host cell wall barrier. Begomovirus genome is shuttled out of nucleus by Nuclear shuttle protein (NSP) and the movement protein transports the DNA-NSP complex to cell plasmodesmata and facilitates further movement across the cell wall. This chain is Movement protein BC1, found in Macroptilium lathyroides (Lima bean).